A 499-amino-acid chain; its full sequence is Transcriptional regulator sdnM (499 aa).

Its subcellular location is the nucleus. It functions in the pathway antibiotic biosynthesis. Transcriptional regulator; part of the gene cluster that mediates the biosynthesis of sordarin and hypoxysordarin, glycoside antibiotics with a unique tetracyclic diterpene aglycone structure. First, the geranylgeranyl diphosphate synthase sdnC constructs GGDP from farnesyl diphosphate and isopentenyl diphosphate. The diterpene cyclase sdnA then catalyzes the cyclization of GGDP to afford cycloaraneosene. Cycloaraneosene is then hydroxylated four times by the putative cytochrome P450 monooxygenases sdnB, sdnE, sdnF and sdnH to give a hydroxylated cycloaraneosene derivative such as cycloaraneosene-8,9,13,19-tetraol. Although the order of the hydroxylations is unclear, at least C8, C9 and C13 of the cycloaraneosene skeleton are hydroxylated before the sordaricin formation. Dehydration of the 13-hydroxy group of the hydroxylated cycloaraneosene derivative might be catalyzed by an unassigned hypothetical protein such as sdnG and sdnP to construct the cyclopentadiene moiety. The FAD-dependent oxidoreductase sdnN is proposed to catalyze the oxidation at C9 of the hydroxylated cycloaraneosene derivative and also catalyze the Baeyer-Villiger oxidation to give the lactone intermediate. The presumed lactone intermediate would be hydrolyzed to give an acrolein moiety and a carboxylate moiety. Then, [4+2]cycloaddition would occur between the acrolein moiety and the cyclopentadiene moiety to give sordaricin. SdnN might also be involved in the [4+2]cycloaddition after the hypothesized oxidation to accommodate the oxidized product and prompt the [4+2]cycloaddition. GDP-6-deoxy-D-altrose may be biosynthesized from GDP-D-mannose by the putative GDP-mannose-4,6-dehydratase sdnI and the short-chain dehydrogenase sdnK. The glycosyltransferase sdnJ catalyzes the attachment of 6-deoxy-D-altrose onto the 19-hydroxy group of sordaricin to give 4'-O-demethylsordarin. The methyltransferase sdnD would complete the biosynthesis of sordarin. Sordarin can be further modified into hypoxysordarin. The unique acyl chain at the 3'-hydroxy group of hypoxysordarin would be constructed by an iterative type I PKS sdnO and the trans-acting polyketide methyltransferase sdnL. SdnL would be responsible for the introduction of an alpha-methyl group of the polyketide chain. Alternatively, the beta-lactamase-like protein sdnR might be responsible for the cleavage and transfer of the polyketide chain from the PKS sdnO to sordarin. Two putative cytochrome P450 monooxygenases, sdnQ and sdnT, might catalyze the epoxidations of the polyketide chain to complete the biosynthesis of hypoxysordarin. Transcriptional regulators sdnM and sdnS are presumably encoded for the transcriptional regulation of the expression of the sdn gene cluster. In Sordaria araneosa (Pleurage araneosa), this protein is Transcriptional regulator sdnM.